Here is a 734-residue protein sequence, read N- to C-terminus: Ribosomal RNA large subunit methyltransferase K/L (734 aa).

Residues H49 to L167 form the THUMP domain.

The protein belongs to the methyltransferase superfamily. RlmKL family.

The protein localises to the cytoplasm. It catalyses the reaction guanosine(2445) in 23S rRNA + S-adenosyl-L-methionine = N(2)-methylguanosine(2445) in 23S rRNA + S-adenosyl-L-homocysteine + H(+). The enzyme catalyses guanosine(2069) in 23S rRNA + S-adenosyl-L-methionine = N(2)-methylguanosine(2069) in 23S rRNA + S-adenosyl-L-homocysteine + H(+). In terms of biological role, specifically methylates the guanine in position 2445 (m2G2445) and the guanine in position 2069 (m7G2069) of 23S rRNA. In Acinetobacter baumannii (strain AYE), this protein is Ribosomal RNA large subunit methyltransferase K/L.